Consider the following 83-residue polypeptide: Disintegrin bitistatin (83 aa).

In terms of domain architecture, Disintegrin spans 2–83; it reads PPVCGNKILE…GKSSDCPWNH (82 aa). 10 cysteine pairs are disulfide-bonded: Cys5–Cys24, Cys5–Cys34, Cys16–Cys29, Cys16–Cys34, Cys18–Cys24, Cys18–Cys29, Cys28–Cys51, Cys42–Cys48, Cys47–Cys72, and Cys60–Cys79. The short motif at 64–66 is the Cell attachment site element; it reads RGD.

This sequence belongs to the venom metalloproteinase (M12B) family. P-II subfamily. P-IIa sub-subfamily. In terms of assembly, monomer. Post-translationally, exists in 3 forms in the venom. The forms A, B, and C are present at 53%, 32% and 15%. The forms A and B differ by their disulfide bond pattern in the N-terminal part. No information is known about form C. Expressed by the venom gland.

The protein localises to the secreted. Its function is as follows. Inhibits fibrinogen interaction with platelets. Acts by binding to alpha-IIb/beta-3 (ITGA2B/ITGB3) on the platelet surface and inhibits aggregation induced by ADP, thrombin, platelet-activating factor and collagen. The chain is Disintegrin bitistatin from Bitis arietans (African puff adder).